Here is a 386-residue protein sequence, read N- to C-terminus: Succinate--CoA ligase [ADP-forming] subunit beta (386 aa).

The 236-residue stretch at 9–244 folds into the ATP-grasp domain; sequence KEIFRKYGVP…LAEEEPREIQ (236 aa). ATP contacts are provided by residues Lys46, 53 to 55, Glu99, Leu102, and Glu107; that span reads GRG. 2 residues coordinate Mg(2+): Asn199 and Asp213. Substrate is bound by residues Asn264 and 321 to 323; that span reads GIM.

Belongs to the succinate/malate CoA ligase beta subunit family. As to quaternary structure, heterotetramer of two alpha and two beta subunits. It depends on Mg(2+) as a cofactor.

It carries out the reaction succinate + ATP + CoA = succinyl-CoA + ADP + phosphate. It catalyses the reaction GTP + succinate + CoA = succinyl-CoA + GDP + phosphate. It participates in carbohydrate metabolism; tricarboxylic acid cycle; succinate from succinyl-CoA (ligase route): step 1/1. Its function is as follows. Succinyl-CoA synthetase functions in the citric acid cycle (TCA), coupling the hydrolysis of succinyl-CoA to the synthesis of either ATP or GTP and thus represents the only step of substrate-level phosphorylation in the TCA. The beta subunit provides nucleotide specificity of the enzyme and binds the substrate succinate, while the binding sites for coenzyme A and phosphate are found in the alpha subunit. The sequence is that of Succinate--CoA ligase [ADP-forming] subunit beta from Myxococcus xanthus (strain DK1622).